We begin with the raw amino-acid sequence, 484 residues long: Sperm-associated antigen 8 (484 aa).

The span at 1 to 11 (METSESTDRSQ) shows a compositional bias: basic and acidic residues. 3 disordered regions span residues 1–32 (METSESTDRSQSRCLDLQPSSDGLGSSSDPFS), 123–221 (DLSS…SAPV), and 324–348 (LQPQSPTSSCTTQKDSYQPPKSHCQ). 2 stretches are compositionally biased toward low complexity: residues 20–32 (SSDGLGSSSDPFS) and 125–160 (SSSRGPIPGSSSGPVPGSSSSPGPDSSSDPGPSSSS). The span at 161–195 (GPGGSPGGSGRGPGHGPGPGGGSGQGPGGGSGQGT) shows a compositional bias: gly residues. Over residues 324–339 (LQPQSPTSSCTTQKDS) the composition is skewed to polar residues. Mn regions lie at residues 332–345 (SCTTQKDSYQPPKS) and 384–398 (ESVTHHDYKKELVQA). The tract at residues 455 to 484 (PLPFEPESYSQHGEISSLACQGGGQGGGGG) is disordered. Over residues 475–484 (QGGGQGGGGG) the composition is skewed to gly residues.

The protein belongs to the SPAG8 family. As to quaternary structure, microtubule inner protein component of sperm flagellar doublet microtubules. Interacts with FHL5 (via second LIM domain). Interacts with RANBP9. In terms of tissue distribution, expressed in trachea multiciliated cells.

It localises to the cytoplasm. The protein resides in the nucleus. It is found in the cytoplasmic vesicle. Its subcellular location is the secretory vesicle. The protein localises to the acrosome. It localises to the cytoskeleton. The protein resides in the microtubule organizing center. It is found in the spindle. Its subcellular location is the cilium axoneme. The protein localises to the flagellum axoneme. Microtubule inner protein (MIP) part of the dynein-decorated doublet microtubules (DMTs) in cilia axoneme, which is required for motile cilia beating. Plays a role in spermatogenesis by enhancing the binding of CREM isoform tau to its coactivator FHL5 and increasing the FHL5-regulated transcriptional activation of CREM isoform tau. Involved in the acrosome reaction and in binding of sperm to the zona pellucida. Plays a role in regulation of the cell cycle by controlling progression through the G2/M phase, possibly by delaying the activation of CDK1 which is required for entry into mitosis. May play a role in fertility and microtubule formation through interaction with RANBP9. This Bos taurus (Bovine) protein is Sperm-associated antigen 8 (SPAG8).